Reading from the N-terminus, the 281-residue chain is CCAAT/enhancer-binding protein epsilon (281 aa).

Positions 1-30 are disordered; the sequence is MSHGTYYECEPRGGQQPLEFSGGRAGPGEL. K121 is covalently cross-linked (Glycyl lysine isopeptide (Lys-Gly) (interchain with G-Cter in SUMO2)). S181 is modified (phosphoserine). Residues 204 to 267 form the bZIP domain; it reads SLEYRLRRER…DTLRNLFRQI (64 aa). A basic motif region spans residues 208–245; that stretch reads RLRRERNNIAVRKSRDKAKRRIMETQQKVLEYMAENER. Residues 246 to 267 form a leucine-zipper region; that stretch reads LRNRVDQLTQELDTLRNLFRQI.

It belongs to the bZIP family. C/EBP subfamily. As to quaternary structure, binds DNA as a homodimer and as a heterodimer. Can form stable heterodimers with CEBPA, CEBPB and CEBPD. Interacts with GATA1 and SPI1. Interacts with SMARCD2. Phosphorylated.

Its subcellular location is the nucleus. Functionally, transcriptional activator. C/EBP are DNA-binding proteins that recognize two different motifs: the CCAAT homology common to many promoters and the enhanced core homology common to many enhancers. Required for the promyelocyte-myelocyte transition in myeloid differentiation. The chain is CCAAT/enhancer-binding protein epsilon (Cebpe) from Mus musculus (Mouse).